The following is a 422-amino-acid chain: UDP-N-acetylglucosamine 1-carboxyvinyltransferase (422 aa).

23–24 contributes to the phosphoenolpyruvate binding site; sequence KN. Arg-92 serves as a coordination point for UDP-N-acetyl-alpha-D-glucosamine. Cys-116 acts as the Proton donor in catalysis. Cys-116 carries the post-translational modification 2-(S-cysteinyl)pyruvic acid O-phosphothioketal. UDP-N-acetyl-alpha-D-glucosamine is bound by residues 121–125, 161–165, Asp-306, and Ile-328; these read RPVDL and KVSVG.

It belongs to the EPSP synthase family. MurA subfamily.

Its subcellular location is the cytoplasm. It carries out the reaction phosphoenolpyruvate + UDP-N-acetyl-alpha-D-glucosamine = UDP-N-acetyl-3-O-(1-carboxyvinyl)-alpha-D-glucosamine + phosphate. Its pathway is cell wall biogenesis; peptidoglycan biosynthesis. In terms of biological role, cell wall formation. Adds enolpyruvyl to UDP-N-acetylglucosamine. This chain is UDP-N-acetylglucosamine 1-carboxyvinyltransferase, found in Aliivibrio fischeri (strain MJ11) (Vibrio fischeri).